Consider the following 859-residue polypeptide: Rod cGMP-specific 3',5'-cyclic phosphodiesterase subunit alpha (859 aa).

G2 is subject to N-acetylglycine. GAF domains lie at 73–222 (QAEK…NLIM) and 254–431 (DIER…GWSV). Residues 483-816 (EEEELAEILQ…KEWKALADEY (334 aa)) form the PDEase domain. The Proton donor role is filled by H559. Positions 563, 599, 600, and 720 each coordinate a divalent metal cation. The disordered stretch occupies residues 821 to 859 (KGLEEEKQKQQAANQAAAGSQHGGKQPGGGPASKSCCVQ). The segment covering 830-840 (QQAANQAAAGS) has biased composition (low complexity). Gly residues predominate over residues 841-851 (QHGGKQPGGGP). C856 is subject to Cysteine methyl ester. Residue C856 is the site of S-farnesyl cysteine attachment. Positions 857–859 (CVQ) are cleaved as a propeptide — removed in mature form.

It belongs to the cyclic nucleotide phosphodiesterase family. In terms of assembly, oligomer composed of two catalytic chains (alpha and beta), an inhibitory chain (gamma) and the delta chain. The cofactor is a divalent metal cation.

Its subcellular location is the cell membrane. The protein localises to the cell projection. It is found in the cilium. The protein resides in the photoreceptor outer segment. The catalysed reaction is 3',5'-cyclic GMP + H2O = GMP + H(+). Rod-specific cGMP phosphodiesterase that catalyzes the hydrolysis of 3',5'-cyclic GMP. This protein participates in processes of transmission and amplification of the visual signal. The sequence is that of Rod cGMP-specific 3',5'-cyclic phosphodiesterase subunit alpha from Bos taurus (Bovine).